An 89-amino-acid chain; its full sequence is Small ribosomal subunit protein uS15 (89 aa).

Belongs to the universal ribosomal protein uS15 family. As to quaternary structure, part of the 30S ribosomal subunit. Forms a bridge to the 50S subunit in the 70S ribosome, contacting the 23S rRNA.

Functionally, one of the primary rRNA binding proteins, it binds directly to 16S rRNA where it helps nucleate assembly of the platform of the 30S subunit by binding and bridging several RNA helices of the 16S rRNA. Forms an intersubunit bridge (bridge B4) with the 23S rRNA of the 50S subunit in the ribosome. This is Small ribosomal subunit protein uS15 from Photorhabdus laumondii subsp. laumondii (strain DSM 15139 / CIP 105565 / TT01) (Photorhabdus luminescens subsp. laumondii).